Here is a 317-residue protein sequence, read N- to C-terminus: Beta-ketoacyl-[acyl-carrier-protein] synthase III (317 aa).

Active-site residues include cysteine 112 and histidine 244. The segment at glutamine 245–arginine 249 is ACP-binding. The active site involves asparagine 274.

This sequence belongs to the thiolase-like superfamily. FabH family. In terms of assembly, homodimer.

The protein resides in the cytoplasm. The enzyme catalyses malonyl-[ACP] + acetyl-CoA + H(+) = 3-oxobutanoyl-[ACP] + CO2 + CoA. It participates in lipid metabolism; fatty acid biosynthesis. Catalyzes the condensation reaction of fatty acid synthesis by the addition to an acyl acceptor of two carbons from malonyl-ACP. Catalyzes the first condensation reaction which initiates fatty acid synthesis and may therefore play a role in governing the total rate of fatty acid production. Possesses both acetoacetyl-ACP synthase and acetyl transacylase activities. Its substrate specificity determines the biosynthesis of branched-chain and/or straight-chain of fatty acids. In Rickettsia felis (strain ATCC VR-1525 / URRWXCal2) (Rickettsia azadi), this protein is Beta-ketoacyl-[acyl-carrier-protein] synthase III.